Here is a 163-residue protein sequence, read N- to C-terminus: ECF RNA polymerase sigma factor SigM (163 aa).

The Polymerase core binding motif lies at 30-43 (DLLQETFMRAYIHI). The H-T-H motif DNA-binding region spans 127–146 (YKEASHIMNISEANFKSVLF).

Belongs to the sigma-70 factor family. ECF subfamily. Interacts with the N-terminus of YhdL, which is probably its anti-sigma factor. Interacts transiently with the RNAP core.

Sigma factors are initiation factors that promote the attachment of RNA polymerase (RNAP) to specific initiation sites and are then released. Extracytoplasmic function (ECF) sigma factors are held in an inactive form by a cognate anti-sigma factor (YhdL) until released. This sigma factor is involved in the maintenance of membrane and cell wall integrity in response to environmental stresses including salt, acid, ethanol and antibiotics stress. Partially regulates transcription from a number of genes including disA. Associates with RNAP core under all growth phases. This is ECF RNA polymerase sigma factor SigM (sigM) from Bacillus subtilis (strain 168).